Consider the following 109-residue polypeptide: Tyrosine-protein phosphatase 16 (109 aa).

Residues 1-109 form the Tyrosine-protein phosphatase domain; it reads WRMVTEHTST…RIKTQKPIVV (109 aa). Asp81 provides a ligand contact to substrate.

Belongs to the protein-tyrosine phosphatase family.

It catalyses the reaction O-phospho-L-tyrosyl-[protein] + H2O = L-tyrosyl-[protein] + phosphate. The polypeptide is Tyrosine-protein phosphatase 16 (STY-16) (Styela plicata (Wrinkled sea squirt)).